A 301-amino-acid chain; its full sequence is Glucose-1-phosphate adenylyltransferase large subunit (301 aa).

It belongs to the bacterial/plant glucose-1-phosphate adenylyltransferase family. Heterotetramer.

It localises to the plastid. The protein localises to the chloroplast. Its subcellular location is the amyloplast. The enzyme catalyses alpha-D-glucose 1-phosphate + ATP + H(+) = ADP-alpha-D-glucose + diphosphate. Its pathway is glycan biosynthesis; starch biosynthesis. Insensitive to 3'phosphoglycerate and orthophosphate. This protein plays a role in synthesis of starch. It catalyzes the synthesis of the activated glycosyl donor, ADP-glucose from Glc-1-P and ATP. This chain is Glucose-1-phosphate adenylyltransferase large subunit (AGA.1), found in Triticum aestivum (Wheat).